The chain runs to 434 residues: Histidinol dehydrogenase (434 aa).

Residues Y130, Q188, and N211 each contribute to the NAD(+) site. S237, Q259, and H262 together coordinate substrate. Zn(2+)-binding residues include Q259 and H262. Catalysis depends on proton acceptor residues E326 and H327. Substrate is bound by residues H327, D360, E414, and H419. Residue D360 participates in Zn(2+) binding. H419 contacts Zn(2+).

Belongs to the histidinol dehydrogenase family. As to quaternary structure, homodimer. The cofactor is Zn(2+). It depends on Mn(2+) as a cofactor.

It catalyses the reaction L-histidinol + 2 NAD(+) + H2O = L-histidine + 2 NADH + 3 H(+). The protein operates within amino-acid biosynthesis; L-histidine biosynthesis; L-histidine from 5-phospho-alpha-D-ribose 1-diphosphate: step 9/9. Its activity is regulated as follows. Activity is lost when the metal is removed through urea denaturation or chelation, and can be regained by addition of metal. Its function is as follows. Catalyzes the sequential NAD-dependent oxidations of L-histidinol to L-histidinaldehyde and then to L-histidine. In Salmonella typhimurium (strain LT2 / SGSC1412 / ATCC 700720), this protein is Histidinol dehydrogenase (hisD).